Reading from the N-terminus, the 971-residue chain is Exportin-2 (971 aa).

Met-1 is modified (N-acetylmethionine). One can recognise an Importin N-terminal domain in the interval 29–102 (AEKFLESVEG…KANIVHLMLS (74 aa)). Ser-112 carries the post-translational modification Phosphoserine. 2 positions are modified to N6-acetyllysine: Lys-574 and Lys-824. Residue Ser-931 is modified to Phosphoserine.

Belongs to the XPO2/CSE1 family. In terms of assembly, found in a complex with CSE1L/XPO2, Ran and KPNA2. Binds with high affinity to importin-alpha only in the presence of RanGTP. The complex is dissociated by the combined action of RanBP1 and RanGAP1. Interacts with CFTR.

Its subcellular location is the cytoplasm. The protein resides in the nucleus. Functionally, export receptor for importin-alpha. Mediates importin-alpha re-export from the nucleus to the cytoplasm after import substrates (cargos) have been released into the nucleoplasm. In the nucleus binds cooperatively to importin-alpha and to the GTPase Ran in its active GTP-bound form. Docking of this trimeric complex to the nuclear pore complex (NPC) is mediated through binding to nucleoporins. Upon transit of a nuclear export complex into the cytoplasm, disassembling of the complex and hydrolysis of Ran-GTP to Ran-GDP (induced by RANBP1 and RANGAP1, respectively) cause release of the importin-alpha from the export receptor. CSE1L/XPO2 then return to the nuclear compartment and mediate another round of transport. The directionality of nuclear export is thought to be conferred by an asymmetric distribution of the GTP- and GDP-bound forms of Ran between the cytoplasm and nucleus. The sequence is that of Exportin-2 (CSE1L) from Pongo abelii (Sumatran orangutan).